The following is a 225-amino-acid chain: NAD(P)H-quinone oxidoreductase subunit K, chloroplastic (225 aa).

Positions 43, 44, 108, and 139 each coordinate [4Fe-4S] cluster.

Belongs to the complex I 20 kDa subunit family. NDH is composed of at least 16 different subunits, 5 of which are encoded in the nucleus. Requires [4Fe-4S] cluster as cofactor.

The protein localises to the plastid. The protein resides in the chloroplast thylakoid membrane. The catalysed reaction is a plastoquinone + NADH + (n+1) H(+)(in) = a plastoquinol + NAD(+) + n H(+)(out). It carries out the reaction a plastoquinone + NADPH + (n+1) H(+)(in) = a plastoquinol + NADP(+) + n H(+)(out). In terms of biological role, NDH shuttles electrons from NAD(P)H:plastoquinone, via FMN and iron-sulfur (Fe-S) centers, to quinones in the photosynthetic chain and possibly in a chloroplast respiratory chain. The immediate electron acceptor for the enzyme in this species is believed to be plastoquinone. Couples the redox reaction to proton translocation, and thus conserves the redox energy in a proton gradient. This is NAD(P)H-quinone oxidoreductase subunit K, chloroplastic from Lolium perenne (Perennial ryegrass).